The chain runs to 264 residues: S-adenosylmethionine decarboxylase proenzyme (264 aa).

The active-site Schiff-base intermediate with substrate; via pyruvic acid is the Ser112. The residue at position 112 (Ser112) is a Pyruvic acid (Ser); by autocatalysis. The active-site Proton acceptor; for processing activity is the His117. The active-site Proton donor; for catalytic activity is Cys140.

This sequence belongs to the prokaryotic AdoMetDC family. Type 2 subfamily. Heterooctamer of four alpha and four beta chains arranged as a tetramer of alpha/beta heterodimers. It depends on pyruvate as a cofactor. Is synthesized initially as an inactive proenzyme. Formation of the active enzyme involves a self-maturation process in which the active site pyruvoyl group is generated from an internal serine residue via an autocatalytic post-translational modification. Two non-identical subunits are generated from the proenzyme in this reaction, and the pyruvate is formed at the N-terminus of the alpha chain, which is derived from the carboxyl end of the proenzyme. The post-translation cleavage follows an unusual pathway, termed non-hydrolytic serinolysis, in which the side chain hydroxyl group of the serine supplies its oxygen atom to form the C-terminus of the beta chain, while the remainder of the serine residue undergoes an oxidative deamination to produce ammonia and the pyruvoyl group blocking the N-terminus of the alpha chain.

The catalysed reaction is S-adenosyl-L-methionine + H(+) = S-adenosyl 3-(methylsulfanyl)propylamine + CO2. It participates in amine and polyamine biosynthesis; S-adenosylmethioninamine biosynthesis; S-adenosylmethioninamine from S-adenosyl-L-methionine: step 1/1. Functionally, catalyzes the decarboxylation of S-adenosylmethionine to S-adenosylmethioninamine (dcAdoMet), the propylamine donor required for the synthesis of the polyamines spermine and spermidine from the diamine putrescine. The protein is S-adenosylmethionine decarboxylase proenzyme of Klebsiella pneumoniae subsp. pneumoniae (strain ATCC 700721 / MGH 78578).